Here is a 705-residue protein sequence, read N- to C-terminus: Elongation factor G (705 aa).

One can recognise a tr-type G domain in the interval 7–287; the sequence is HLTRNIGIMA…YVCAFLPSPL (281 aa). GTP contacts are provided by residues 16–23, 84–88, and 138–141; these read AHIDAGKT, DTPGH, and NKMD. Residues 291 to 312 are disordered; it reads NVVGTNPDTGAEEDRKPSEDDK. Over residues 302–312 the composition is skewed to basic and acidic residues; sequence EEDRKPSEDDK.

Belongs to the TRAFAC class translation factor GTPase superfamily. Classic translation factor GTPase family. EF-G/EF-2 subfamily.

The protein localises to the cytoplasm. Its function is as follows. Catalyzes the GTP-dependent ribosomal translocation step during translation elongation. During this step, the ribosome changes from the pre-translocational (PRE) to the post-translocational (POST) state as the newly formed A-site-bound peptidyl-tRNA and P-site-bound deacylated tRNA move to the P and E sites, respectively. Catalyzes the coordinated movement of the two tRNA molecules, the mRNA and conformational changes in the ribosome. The chain is Elongation factor G from Bacteroides fragilis (strain ATCC 25285 / DSM 2151 / CCUG 4856 / JCM 11019 / LMG 10263 / NCTC 9343 / Onslow / VPI 2553 / EN-2).